The following is a 64-amino-acid chain: Conotoxin VnMLCL-05 (64 aa).

Positions 1–19 (MLCLPVFIILLLLASPAAP) are cleaved as a signal peptide. A propeptide spanning residues 20 to 43 (NPLQTRIQSNLIRAGPEDANIKTD) is cleaved from the precursor. Lysine amide is present on K63.

This sequence belongs to the conotoxin T superfamily. Expressed by the venom duct.

It localises to the secreted. In Conus ventricosus (Mediterranean cone), this protein is Conotoxin VnMLCL-05.